The sequence spans 1379 residues: DNA-directed RNA polymerase subunit beta'' (1379 aa).

Positions 220, 293, 300, and 303 each coordinate Zn(2+).

Belongs to the RNA polymerase beta' chain family. RpoC2 subfamily. As to quaternary structure, in plastids the minimal PEP RNA polymerase catalytic core is composed of four subunits: alpha, beta, beta', and beta''. When a (nuclear-encoded) sigma factor is associated with the core the holoenzyme is formed, which can initiate transcription. Requires Zn(2+) as cofactor.

Its subcellular location is the plastid. It localises to the chloroplast. It catalyses the reaction RNA(n) + a ribonucleoside 5'-triphosphate = RNA(n+1) + diphosphate. Its function is as follows. DNA-dependent RNA polymerase catalyzes the transcription of DNA into RNA using the four ribonucleoside triphosphates as substrates. The chain is DNA-directed RNA polymerase subunit beta'' from Crucihimalaya wallichii (Rock-cress).